We begin with the raw amino-acid sequence, 361 residues long: Histidine biosynthesis bifunctional protein HisB (361 aa).

The tract at residues 1 to 172 (MSQPTLFIDR…PKTTACERPP (172 aa)) is histidinol-phosphatase. Asp-9 acts as the Nucleophile in catalysis. Residues Asp-9 and Asp-11 each coordinate Mg(2+). The Proton donor role is filled by Asp-11. Zn(2+) is bound by residues Cys-92, His-94, Cys-100, and Cys-102. Asp-129 serves as a coordination point for Mg(2+). The imidazoleglycerol-phosphate dehydratase stretch occupies residues 173–361 (RYAEVVRTTK…NELPSSKGVL (189 aa)).

It in the N-terminal section; belongs to the histidinol-phosphatase family. The protein in the C-terminal section; belongs to the imidazoleglycerol-phosphate dehydratase family. Mg(2+) serves as cofactor. It depends on Zn(2+) as a cofactor.

The protein localises to the cytoplasm. The catalysed reaction is D-erythro-1-(imidazol-4-yl)glycerol 3-phosphate = 3-(imidazol-4-yl)-2-oxopropyl phosphate + H2O. It carries out the reaction L-histidinol phosphate + H2O = L-histidinol + phosphate. It participates in amino-acid biosynthesis; L-histidine biosynthesis; L-histidine from 5-phospho-alpha-D-ribose 1-diphosphate: step 6/9. The protein operates within amino-acid biosynthesis; L-histidine biosynthesis; L-histidine from 5-phospho-alpha-D-ribose 1-diphosphate: step 8/9. The polypeptide is Histidine biosynthesis bifunctional protein HisB (Actinobacillus pleuropneumoniae serotype 7 (strain AP76)).